The chain runs to 206 residues: 2-phospho-L-lactate guanylyltransferase (206 aa).

Belongs to the CofC family. Homodimer.

The catalysed reaction is (2S)-2-phospholactate + GTP + H(+) = (2S)-lactyl-2-diphospho-5'-guanosine + diphosphate. The protein operates within cofactor biosynthesis; coenzyme F420 biosynthesis. Guanylyltransferase that catalyzes the activation of (2S)-2-phospholactate (2-PL) as (2S)-lactyl-2-diphospho-5'-guanosine, via the condensation of 2-PL with GTP. It is involved in the biosynthesis of coenzyme F420, a hydride carrier cofactor. This is 2-phospho-L-lactate guanylyltransferase from Archaeoglobus profundus (strain DSM 5631 / JCM 9629 / NBRC 100127 / Av18).